A 136-amino-acid chain; its full sequence is MAKQDNSSSHENTLTEMQRYVTQEHGTEPPYSGKLLHNKDEGIYHCLICRAPLFLSDSKYDSGCGWPSFYQPFSPEAIRYLEDDSHGMQRVEIRCGSCDAHLGHVFPDGPQPTGERFCVNSASLSFTDDNGNKTLG.

One can recognise a MsrB domain in the interval 7–129; it reads SSSHENTLTE…NSASLSFTDD (123 aa). C46, C49, C95, and C98 together coordinate Zn(2+). C118 (nucleophile) is an active-site residue.

The protein belongs to the MsrB Met sulfoxide reductase family. Zn(2+) is required as a cofactor.

The catalysed reaction is L-methionyl-[protein] + [thioredoxin]-disulfide + H2O = L-methionyl-(R)-S-oxide-[protein] + [thioredoxin]-dithiol. The protein is Peptide methionine sulfoxide reductase MsrB of Erwinia tasmaniensis (strain DSM 17950 / CFBP 7177 / CIP 109463 / NCPPB 4357 / Et1/99).